Reading from the N-terminus, the 714-residue chain is Stellatatriene synthase (714 aa).

Positions 1 to 325 are stellata-2,6,19-trien synthase; that stretch reads MEYKFSTVVD…RYNSSGSFSD (325 aa). Positions 92 and 96 each coordinate Mg(2+). The short motif at 92 to 96 is the DDXXD motif 1 element; the sequence is DDVTD. The short motif at 276–284 is the NSE motif element; sequence YLKIVEEYK. Residues 326–713 are geranylgeranyl diphosphate synthase; it reads HQLELMKNGV…LRLIMELLKT (388 aa). The tract at residues 332–356 is disordered; the sequence is KNGVPKDPASGSTNGTSNGTSNGTS. Low complexity predominate over residues 341-356; the sequence is SGSTNGTSNGTSNGTS. The isopentenyl diphosphate site is built by Lys-434, Arg-437, and His-466. Residues Asp-473 and Asp-477 each contribute to the Mg(2+) site. The DDXXD motif 2 motif lies at 473 to 477; that stretch reads DDVED. Arg-482 provides a ligand contact to dimethylallyl diphosphate. Residue Arg-483 coordinates isopentenyl diphosphate. Dimethylallyl diphosphate-binding residues include Lys-560, Thr-561, Gln-596, Asn-603, Lys-613, and Lys-623.

The protein in the N-terminal section; belongs to the terpene synthase family. In the C-terminal section; belongs to the FPP/GGPP synthase family. As to quaternary structure, hexamer.

The catalysed reaction is 4 isopentenyl diphosphate + dimethylallyl diphosphate = (2E,6E,10E,14E)-geranylfarnesyl diphosphate + 4 diphosphate. It carries out the reaction (2E,6E,10E,14E)-geranylfarnesyl diphosphate = stellata-2,6,19-triene + diphosphate. It functions in the pathway secondary metabolite biosynthesis; terpenoid biosynthesis. Its function is as follows. Multifunctional diterpene synthase; part of the gene cluster that mediates the biosynthesis of the sesterterpene stellatic acid. The first step in the pathway is performed by the stellatatriene synthase that possesses both prenyl transferase and terpene cyclase activity, converting isopentenyl diphosphate and dimethylallyl diphosphate into geranylgeranyl diphosphate (GGDP) and then converting GGDP into stellata-2,6,19-triene. The cytochrome P450 monooxygenase Stl-P450 then catalyzes three successive oxidation reactions on the C-20 methyl group to generate the carboxylic acid of stellatic acid. The chain is Stellatatriene synthase from Emericella variicolor (Aspergillus stellatus).